Consider the following 201-residue polypeptide: Putative lipoprotein Hmuk_2215 (201 aa).

The N-terminal stretch at 1–22 is a signal peptide; it reads MCPRPRRAVLLGLGVAMSAIAG. Cys-23 is modified (N-acetylcysteine). Residue Cys-23 is the site of S-archaeol cysteine attachment. Disordered regions lie at residues 25–78 and 182–201; these read ETAP…ETSE and ATRA…GDCP. The span at 69–78 shows a compositional bias: basic and acidic residues; it reads TRADETETSE.

It is found in the cell membrane. In Halomicrobium mukohataei (strain ATCC 700874 / DSM 12286 / JCM 9738 / NCIMB 13541) (Haloarcula mukohataei), this protein is Putative lipoprotein Hmuk_2215.